The following is a 165-amino-acid chain: Xanthine-guanine phosphoribosyltransferase (165 aa).

5-phospho-alpha-D-ribose 1-diphosphate is bound by residues 41–42 and 98–106; these read RG and DDLTDTGKT. Residue Asp99 coordinates Mg(2+). Asp102 and Ile145 together coordinate guanine. Asp102 and Ile145 together coordinate xanthine. GMP contacts are provided by residues 102–106 and 144–145; these read DTGKT and WI.

This sequence belongs to the purine/pyrimidine phosphoribosyltransferase family. XGPT subfamily. As to quaternary structure, homotetramer. Mg(2+) serves as cofactor.

It localises to the cell inner membrane. The catalysed reaction is GMP + diphosphate = guanine + 5-phospho-alpha-D-ribose 1-diphosphate. It carries out the reaction XMP + diphosphate = xanthine + 5-phospho-alpha-D-ribose 1-diphosphate. It catalyses the reaction IMP + diphosphate = hypoxanthine + 5-phospho-alpha-D-ribose 1-diphosphate. It functions in the pathway purine metabolism; GMP biosynthesis via salvage pathway; GMP from guanine: step 1/1. Its pathway is purine metabolism; XMP biosynthesis via salvage pathway; XMP from xanthine: step 1/1. Purine salvage pathway enzyme that catalyzes the transfer of the ribosyl-5-phosphate group from 5-phospho-alpha-D-ribose 1-diphosphate (PRPP) to the N9 position of the 6-oxopurines guanine and xanthine to form the corresponding ribonucleotides GMP (guanosine 5'-monophosphate) and XMP (xanthosine 5'-monophosphate), with the release of PPi. To a lesser extent, also acts on hypoxanthine. The chain is Xanthine-guanine phosphoribosyltransferase from Rhizobium meliloti (strain 1021) (Ensifer meliloti).